A 47-amino-acid chain; its full sequence is Protein YtiD (47 aa).

This chain is Protein YtiD (ytiD), found in Escherichia coli (strain K12).